Consider the following 111-residue polypeptide: MDRNGANMLDGRVESDAKGSFRKDYTKMENNNNGANISDGIYRIIRSFKSFSHFFIRYEEETKEREAEMEIGFPTDVKHLSHIGVDGTMTTFDNTSSSFPFSGFHLTGTVV.

Positions I71 to G84 constitute a CRIB domain.

In terms of assembly, interacts with ARAC11/ROP1. Expressed in roots, leaves, stems, flowers, siliques and pollen.

The protein localises to the cell membrane. Functionally, functions as a downstream effector of Rho-related GTP binding proteins of the 'Rho of Plants' (ROPs) family. Participates in the propagation of ROP GTPase signals in specific cellular responses. Is involved in pollen tube growth regulation through its interaction with ARAC11/ROP1. The protein is CRIB domain-containing protein RIC2 (RIC2) of Arabidopsis thaliana (Mouse-ear cress).